Reading from the N-terminus, the 42-residue chain is Perlinhibin-related protein (42 aa).

In terms of processing, contains four disulfide bonds.

Its function is as follows. Inhibitor of shell growth. The protein is Perlinhibin-related protein of Haliotis laevigata (Smooth Australian abalone).